The following is a 200-amino-acid chain: dTTP/UTP pyrophosphatase (200 aa).

The Proton acceptor role is filled by Asp-72.

It belongs to the Maf family. YhdE subfamily. A divalent metal cation serves as cofactor.

The protein localises to the cytoplasm. The enzyme catalyses dTTP + H2O = dTMP + diphosphate + H(+). It catalyses the reaction UTP + H2O = UMP + diphosphate + H(+). Functionally, nucleoside triphosphate pyrophosphatase that hydrolyzes dTTP and UTP. May have a dual role in cell division arrest and in preventing the incorporation of modified nucleotides into cellular nucleic acids. The protein is dTTP/UTP pyrophosphatase of Pseudomonas syringae pv. syringae (strain B728a).